Here is a 32-residue protein sequence, read N- to C-terminus: Conotoxin pr6b (32 aa).

Residues P6, P13, P20, and P29 each carry the 4-hydroxyproline modification. 3 disulfide bridges follow: C7/C18, C14/C23, and C17/C31.

As to expression, expressed by the venom duct.

It is found in the secreted. Functionally, intraperitoneal injection into fish (0.5 nmol) provokes vertical suspension and paralysis after 6 minutes. The chain is Conotoxin pr6b from Conus parius (Cone snail).